A 904-amino-acid polypeptide reads, in one-letter code: Alanine--tRNA ligase (904 aa).

Histidine 600, histidine 604, cysteine 704, and histidine 708 together coordinate Zn(2+).

This sequence belongs to the class-II aminoacyl-tRNA synthetase family. Requires Zn(2+) as cofactor.

The protein resides in the cytoplasm. It catalyses the reaction tRNA(Ala) + L-alanine + ATP = L-alanyl-tRNA(Ala) + AMP + diphosphate. In terms of biological role, catalyzes the attachment of alanine to tRNA(Ala) in a two-step reaction: alanine is first activated by ATP to form Ala-AMP and then transferred to the acceptor end of tRNA(Ala). Also edits incorrectly charged Ser-tRNA(Ala) and Gly-tRNA(Ala) via its editing domain. The polypeptide is Alanine--tRNA ligase (Metallosphaera sedula (strain ATCC 51363 / DSM 5348 / JCM 9185 / NBRC 15509 / TH2)).